Here is a 208-residue protein sequence, read N- to C-terminus: Large ribosomal subunit protein uL4 (208 aa).

A disordered region spans residues 50–83; the sequence is VKTRAEVSGGGRKPWKQKGTGRARQGSIRAPQWK.

Belongs to the universal ribosomal protein uL4 family. As to quaternary structure, part of the 50S ribosomal subunit.

In terms of biological role, one of the primary rRNA binding proteins, this protein initially binds near the 5'-end of the 23S rRNA. It is important during the early stages of 50S assembly. It makes multiple contacts with different domains of the 23S rRNA in the assembled 50S subunit and ribosome. Functionally, forms part of the polypeptide exit tunnel. This is Large ribosomal subunit protein uL4 from Mycoplasma capricolum subsp. capricolum (strain California kid / ATCC 27343 / NCTC 10154).